The sequence spans 282 residues: DNA-binding transcriptional repressor YiaJ (282 aa).

Basic and acidic residues predominate over residues 1 to 20 (MGKEVMGKKENEMAQEKERP). A disordered region spans residues 1–21 (MGKEVMGKKENEMAQEKERPA). Positions 23 to 85 (SQSLFRGLML…PAAGSYRLTT (63 aa)) constitute an HTH iclR-type domain. A DNA-binding region (H-T-H motif) is located at residues 45–64 (LAHLSELAGLNKSTVHRLLQ). One can recognise an IclR-ED domain in the interval 100–272 (IIHIAAPHLE…AQAISNELGF (173 aa)).

Negatively controls the transcription of the yiaKLMNOPQRS operon, which may be involved in the utilization of 2,3-diketo-L-gulonate. The chain is DNA-binding transcriptional repressor YiaJ (yiaJ) from Escherichia coli (strain K12).